The sequence spans 850 residues: Bifunctional levopimaradiene synthase, chloroplastic (850 aa).

A chloroplast-targeting transit peptide spans 1-52 (MALPSSSLSSQIHTGATTQCIPHFHGSLNAGTSAGKRRSLYLRWGKGPSKIV). A substrate-binding site is contributed by Lys-250. Asp-383 and Asp-385 together coordinate Mg(2+). The DXDD motif signature appears at 383-386 (DIDD). Lys-470 contacts substrate. 5 residues coordinate Mg(2+): Asp-602, Asp-606, Asn-746, Thr-750, and Glu-754. A DDXXD motif motif is present at residues 602–606 (DDLYD).

The protein belongs to the terpene synthase family. Tpsd subfamily. It depends on Mg(2+) as a cofactor. In terms of tissue distribution, expressed in young tissues such as flushing buds and green bark tissues. Lower levels in mature needles and bark.

The protein resides in the plastid. Its subcellular location is the chloroplast. It carries out the reaction (2E,6E,10E)-geranylgeranyl diphosphate = (+)-copalyl diphosphate. The catalysed reaction is (+)-copalyl diphosphate = abieta-8(14),12-diene + diphosphate. The enzyme catalyses (+)-copalyl diphosphate = neoabietadiene + diphosphate. It participates in terpene metabolism; oleoresin biosynthesis. Functionally, involved in defensive oleoresin formation in conifers in response to insect attack or other injury. Involved in diterpene (C20) olefins biosynthesis. Bifunctional enzyme that catalyzes two sequential cyclizations of geranylgeranyl diphosphate (GGPP) to levopimaradiene. Levopimaradiene is the major products of the enzyme followed by abietadiene, neoabietadiene and palustradiene. No activity with geranyl diphosphate (GPP) or farnesyl diphosphate (FPP) as substrate. This is Bifunctional levopimaradiene synthase, chloroplastic (LPS) from Pinus taeda (Loblolly pine).